A 178-amino-acid polypeptide reads, in one-letter code: Deoxycytidylate deaminase (178 aa).

The 132-residue stretch at 14–145 (EWPEYFMAVA…DEATAARLLF (132 aa)) folds into the CMP/dCMP-type deaminase domain. His84 contributes to the Zn(2+) binding site. Residue Glu86 is the Proton donor of the active site. Zn(2+)-binding residues include Cys110 and Cys113. Ser174 carries the phosphoserine modification.

This sequence belongs to the cytidine and deoxycytidylate deaminase family. Homohexamer. Zn(2+) serves as cofactor.

It catalyses the reaction dCMP + H2O + H(+) = dUMP + NH4(+). The catalysed reaction is 5-hydroxymethyl-dCMP + H2O + H(+) = 5-hydroxymethyl-dUMP + NH4(+). With respect to regulation, allosteric enzyme whose activity is greatly influenced by the end products of its metabolic pathway, dCTP and dTTP. Its function is as follows. Catalyzes the deamination of dCMP to dUMP, providing the nucleoside monophosphate substrate for the thymidylate synthase/TYMS. Also, part of a nucleotide salvage pathway that eliminates epigenetically modified 5-hydroxymethyl-dCMP (hmdCMP) in a two-step process entailing deamination to cytotoxic 5-hydroxymethyl-dUMP (hmdUMP), followed by its hydrolysis into 5-hydroxymethyluracil (hmU) and 2-deoxy-D-ribose 5-phosphate (deoxyribosephosphate). Catalyzes the first step in that pathway, the deamination of 5-hydroxymethyl-dCMP (hmdCMP). This is Deoxycytidylate deaminase from Homo sapiens (Human).